Reading from the N-terminus, the 386-residue chain is Patatin group M-1 (386 aa).

Residues M1–A23 form the signal peptide. Residues L32–L229 enclose the PNPLA domain. The GXGXXG motif lies at G36 to G41. A GXSXG motif is present at residues G75–G79. Catalysis depends on S77, which acts as the Nucleophile. A glycan (N-linked (GlcNAc...) asparagine) is linked at N115. Catalysis depends on D215, which acts as the Proton acceptor. A DGA/G motif is present at residues D215 to G217.

This sequence belongs to the patatin family. As to expression, tuber.

Its subcellular location is the vacuole. Its function is as follows. Probable lipolytic acyl hydrolase (LAH), an activity which is thought to be involved in the response of tubers to pathogens. This Solanum tuberosum (Potato) protein is Patatin group M-1.